We begin with the raw amino-acid sequence, 284 residues long: Ribosomal RNA small subunit methyltransferase A (284 aa).

S-adenosyl-L-methionine is bound by residues N12, L14, G38, E59, D81, and N106.

It belongs to the class I-like SAM-binding methyltransferase superfamily. rRNA adenine N(6)-methyltransferase family. RsmA subfamily.

Its subcellular location is the cytoplasm. It carries out the reaction adenosine(1518)/adenosine(1519) in 16S rRNA + 4 S-adenosyl-L-methionine = N(6)-dimethyladenosine(1518)/N(6)-dimethyladenosine(1519) in 16S rRNA + 4 S-adenosyl-L-homocysteine + 4 H(+). Its function is as follows. Specifically dimethylates two adjacent adenosines (A1518 and A1519) in the loop of a conserved hairpin near the 3'-end of 16S rRNA in the 30S particle. May play a critical role in biogenesis of 30S subunits. This is Ribosomal RNA small subunit methyltransferase A from Phytoplasma australiense.